The primary structure comprises 257 residues: Imidazole glycerol phosphate synthase subunit HisF (257 aa).

Active-site residues include Asp12 and Asp131.

This sequence belongs to the HisA/HisF family. Heterodimer of HisH and HisF.

It is found in the cytoplasm. The catalysed reaction is 5-[(5-phospho-1-deoxy-D-ribulos-1-ylimino)methylamino]-1-(5-phospho-beta-D-ribosyl)imidazole-4-carboxamide + L-glutamine = D-erythro-1-(imidazol-4-yl)glycerol 3-phosphate + 5-amino-1-(5-phospho-beta-D-ribosyl)imidazole-4-carboxamide + L-glutamate + H(+). It functions in the pathway amino-acid biosynthesis; L-histidine biosynthesis; L-histidine from 5-phospho-alpha-D-ribose 1-diphosphate: step 5/9. IGPS catalyzes the conversion of PRFAR and glutamine to IGP, AICAR and glutamate. The HisF subunit catalyzes the cyclization activity that produces IGP and AICAR from PRFAR using the ammonia provided by the HisH subunit. This is Imidazole glycerol phosphate synthase subunit HisF from Kineococcus radiotolerans (strain ATCC BAA-149 / DSM 14245 / SRS30216).